The sequence spans 356 residues: Histidinol-phosphate aminotransferase (356 aa).

K210 carries the N6-(pyridoxal phosphate)lysine modification.

It belongs to the class-II pyridoxal-phosphate-dependent aminotransferase family. Histidinol-phosphate aminotransferase subfamily. In terms of assembly, homodimer. Requires pyridoxal 5'-phosphate as cofactor.

It carries out the reaction L-histidinol phosphate + 2-oxoglutarate = 3-(imidazol-4-yl)-2-oxopropyl phosphate + L-glutamate. It functions in the pathway amino-acid biosynthesis; L-histidine biosynthesis; L-histidine from 5-phospho-alpha-D-ribose 1-diphosphate: step 7/9. This Acetobacter pasteurianus (Acetobacter turbidans) protein is Histidinol-phosphate aminotransferase (hisC).